The chain runs to 228 residues: Ribose-5-phosphate isomerase A (228 aa).

Residues 32–35 (TGST), 85–88 (DGAD), and 98–101 (KGGG) contribute to the substrate site. The active-site Proton acceptor is the glutamate 107. Lysine 125 contacts substrate.

This sequence belongs to the ribose 5-phosphate isomerase family. Homodimer.

It carries out the reaction aldehydo-D-ribose 5-phosphate = D-ribulose 5-phosphate. The protein operates within carbohydrate degradation; pentose phosphate pathway; D-ribose 5-phosphate from D-ribulose 5-phosphate (non-oxidative stage): step 1/1. Its function is as follows. Catalyzes the reversible conversion of ribose-5-phosphate to ribulose 5-phosphate. The sequence is that of Ribose-5-phosphate isomerase A from Cupriavidus taiwanensis (strain DSM 17343 / BCRC 17206 / CCUG 44338 / CIP 107171 / LMG 19424 / R1) (Ralstonia taiwanensis (strain LMG 19424)).